Reading from the N-terminus, the 405-residue chain is Nodal homolog 2-A (405 aa).

A signal peptide spans 1-18 (MASLGVILFFVIASLIHG). A propeptide spanning residues 19–282 (KPIHSERKAA…RVTDTRRPRR (264 aa)) is cleaved from the precursor. Residues Asn71, Asn172, and Asn343 are each glycosylated (N-linked (GlcNAc...) asparagine). 3 disulfides stabilise this stretch: Cys305–Cys371, Cys334–Cys402, and Cys338–Cys404.

Belongs to the TGF-beta family. In terms of assembly, homodimer; disulfide-linked. Forms heterodimers with the TGF-beta family member derriere. Interacts with tsku; enhances nodal2 activity. In terms of tissue distribution, first localized to the vegetal region of the blastula. Just prior to gastrulation (stage 10), this expression disappears and instead becomes localized to the dorsal marginal zone, with enrichment in the organizer.

The protein localises to the secreted. Cooperation and regulatory loops of multiple nodals are essential for mesendoderm patterning in early embryos. Essential for mesoderm formation and axial patterning during embryonic development. Activates the activin-like signaling pathway to induce dorsal and ventral mesoderm in animal cap ectoderm. In addition, also dorsalizes ventral marginal zone (VMZ) tissues during gastrulation. Induces muscle actin. Appears to act as both a short-range and long-range morphogen. The unprocessed protein inhibits bmp- and wnt-signaling. The polypeptide is Nodal homolog 2-A (nodal2-a) (Xenopus laevis (African clawed frog)).